The following is a 141-amino-acid chain: Oleosin 14.9 kDa (141 aa).

Basic and acidic residues predominate over residues 1 to 22; that stretch reads MADQTRTHHEMISRDSTQEAHP. The disordered stretch occupies residues 1-24; it reads MADQTRTHHEMISRDSTQEAHPKA. Residues 1–29 form a polar region; it reads MADQTRTHHEMISRDSTQEAHPKARQMVK. The interval 30-141 is hydrophobic; that stretch reads AATAVTAGGS…NIGVQHQQVS (112 aa). Helical transmembrane passes span 38-58, 60-80, and 81-101; these read GSLL…LTVA, PLLV…ALII, and TGFL…SWLY.

Belongs to the oleosin family.

The protein localises to the lipid droplet. The protein resides in the membrane. May have a structural role to stabilize the lipid body during desiccation of the seed by preventing coalescence of the oil. Probably interacts with both lipid and phospholipid moieties of lipid bodies. May also provide recognition signals for specific lipase anchorage in lipolysis during seedling growth. The protein is Oleosin 14.9 kDa (OL3) of Arabidopsis thaliana (Mouse-ear cress).